We begin with the raw amino-acid sequence, 138 residues long: Fusaristatin A biosynthesis cluster protein FGSG_08206 (138 aa).

The Stress-response A/B barrel domain occupies 33–130 (VHRVTMFKMP…TIDGMMTVFF (98 aa)).

The protein operates within secondary metabolite biosynthesis. In terms of biological role, part of the gene cluster that mediates the biosynthesis of the lipopeptide fusaristatin A. Fusaristatin A consists of a polyketide chain linked to three amino acid residues glutamine (Gln), dehydroalanine (dehydro-Ala), and beta-aminoisobutyric acid. The biosynthesis starts with formation of a linear polyketide chain by the highly reducing polyketide synthase PKS6. The gene cluster does not contain an acyl-CoA ligase or an acyl-transferase, and it is therefore predicted that the polyketide is transferred directly to the nonribosomal peptide synthetase NRPS7. Modules 1-3 from NRPS7 incorporate dehydro-Ala, Gln, and beta-aminoisobutyric acid in the compound, which is released by cyclization. The beta-aminoisobutyric acid units are most likely not freely available to the NRPS, but can be synthesized from thymine, which requires a dehydrogenase, a monooxygenase, and an aminotransferase. The fusaristatin A cluster contains a cytochrome P450 monooxygenase (FGSG_08207) and an aminotransferase (FGSG_17085), which theoretically can perform two of the enzymatic steps. The enzymes may however also be involved in biosynthesis of dehydroalanine or modification of the polyketide. The dehydro-Ala residue can be a result of cyclization, where serine is dehydrated. The last gene of the cluster encodes a protein with an A/B barrel domain found in variable enzymes, which hampers functional prediction. This Gibberella zeae (strain ATCC MYA-4620 / CBS 123657 / FGSC 9075 / NRRL 31084 / PH-1) (Wheat head blight fungus) protein is Fusaristatin A biosynthesis cluster protein FGSG_08206.